Reading from the N-terminus, the 476-residue chain is Cysteine--tRNA ligase (476 aa).

Zn(2+) is bound at residue Cys31. The 'HIGH' region signature appears at 33–43 (PTVYNYAHIGN). Positions 211, 236, and 240 each coordinate Zn(2+). The short motif at 269–273 (KMSKS) is the 'KMSKS' region element. Residue Lys272 coordinates ATP.

The protein belongs to the class-I aminoacyl-tRNA synthetase family. As to quaternary structure, monomer. It depends on Zn(2+) as a cofactor.

It is found in the cytoplasm. The enzyme catalyses tRNA(Cys) + L-cysteine + ATP = L-cysteinyl-tRNA(Cys) + AMP + diphosphate. The sequence is that of Cysteine--tRNA ligase from Xanthomonas oryzae pv. oryzae (strain MAFF 311018).